The primary structure comprises 334 residues: G-protein coupled receptor 12 (334 aa).

Residues 1–48 lie on the Extracellular side of the membrane; the sequence is MNEDPKVNLSGLPRDCIEAGTPENISAAVPSQGSVVESEPELVVNPWD. Asparagine 8 and asparagine 24 each carry an N-linked (GlcNAc...) asparagine glycan. Residues 49–69 form a helical membrane-spanning segment; the sequence is IVLCSSGTLICCENAVVVLII. Residues 70 to 78 are Cytoplasmic-facing; the sequence is FHSPSLRAP. A helical transmembrane segment spans residues 79–99; sequence MFLLIGSLALADLLAGLGLII. The Extracellular portion of the chain corresponds to 100–113; it reads NFVFAYLLQSEATK. The chain crosses the membrane as a helical span at residues 114-134; that stretch reads LVTIGLIVASFSASVCSLLAI. The Cytoplasmic segment spans residues 135 to 158; it reads TVDRYLSLYYALTYHSERTVTFTY. The helical transmembrane segment at 159 to 179 threads the bilayer; the sequence is VMLVMLWGTSTCLGLLPVMGW. At 180–199 the chain is on the extracellular side; that stretch reads NCLRDESTCSVVRPLTKNNA. A helical transmembrane segment spans residues 200-220; it reads AILSISFLFMFALMLQLYIQI. The Cytoplasmic segment spans residues 221–252; it reads CKIVMRHAHQIALQHHFLATSHYVTTRKGIST. The helical transmembrane segment at 253-273 threads the bilayer; it reads LALILGTFAACWMPFTLYSLI. At 274–282 the chain is on the extracellular side; the sequence is ADYTYPSIY. Residues 283–303 form a helical membrane-spanning segment; the sequence is TYATLLPATYNSIINPVIYAF. The Cytoplasmic portion of the chain corresponds to 304 to 334; that stretch reads RNQEIQKALCLICCGCIPNTLSQRARSPSDV. Cysteine 317 is lipidated: S-palmitoyl cysteine. Residues serine 330 and serine 332 each carry the phosphoserine modification.

This sequence belongs to the G-protein coupled receptor 1 family. As to expression, expressed in the brain, pituitary gland and testis.

Its subcellular location is the cell membrane. Receptor with constitutive G(s) signaling activity that activates cyclic AMP. Promotes neurite outgrowth and blocks myelin inhibition in neurons. In Rattus norvegicus (Rat), this protein is G-protein coupled receptor 12 (Gpr12).